Consider the following 129-residue polypeptide: Lysozyme C (129 aa).

The 129-residue stretch at lysine 1 to leucine 129 folds into the C-type lysozyme domain. 4 disulfide bridges follow: cysteine 6–cysteine 127, cysteine 30–cysteine 115, cysteine 64–cysteine 80, and cysteine 76–cysteine 94. Residues glutamate 35 and aspartate 52 contribute to the active site.

Belongs to the glycosyl hydrolase 22 family. As to quaternary structure, monomer.

The protein resides in the secreted. The catalysed reaction is Hydrolysis of (1-&gt;4)-beta-linkages between N-acetylmuramic acid and N-acetyl-D-glucosamine residues in a peptidoglycan and between N-acetyl-D-glucosamine residues in chitodextrins.. Lysozymes have primarily a bacteriolytic function; those in tissues and body fluids are associated with the monocyte-macrophage system and enhance the activity of immunoagents. The protein is Lysozyme C (LYZ) of Tragopan temminckii (Temminck's tragopan).